The following is a 381-amino-acid chain: Pentatricopeptide repeat-containing protein 2, mitochondrial (381 aa).

A PPR repeat occupies 159–193 (TSFNILMDMLFTKGKYERALQVLIEMKNQDVRFSK). The residue at position 375 (Ser375) is a Phosphoserine.

The protein belongs to the PTCD2 family. In terms of tissue distribution, high expression in heart and liver and low expression in kidney, brain and testis.

The protein localises to the mitochondrion. In terms of biological role, involved in mitochondrial RNA maturation and mitochondrial respiratory chain function. This is Pentatricopeptide repeat-containing protein 2, mitochondrial (Ptcd2) from Mus musculus (Mouse).